The chain runs to 39 residues: MFAEGRIPLWVVAVIAGLGVIAVVGLFFYGAYAGLGSSL.

The helical transmembrane segment at 7-27 (IPLWVVAVIAGLGVIAVVGLF) threads the bilayer.

The protein belongs to the PsbJ family. In terms of assembly, PSII is composed of 1 copy each of membrane proteins PsbA, PsbB, PsbC, PsbD, PsbE, PsbF, PsbH, PsbI, PsbJ, PsbK, PsbL, PsbM, PsbT, PsbX, PsbY, PsbZ, Psb30/Ycf12, peripheral proteins PsbO, CyanoQ (PsbQ), PsbU, PsbV and a large number of cofactors. It forms dimeric complexes.

The protein localises to the cellular thylakoid membrane. Functionally, one of the components of the core complex of photosystem II (PSII). PSII is a light-driven water:plastoquinone oxidoreductase that uses light energy to abstract electrons from H(2)O, generating O(2) and a proton gradient subsequently used for ATP formation. It consists of a core antenna complex that captures photons, and an electron transfer chain that converts photonic excitation into a charge separation. The sequence is that of Photosystem II reaction center protein J from Gloeothece citriformis (strain PCC 7424) (Cyanothece sp. (strain PCC 7424)).